The primary structure comprises 134 residues: MSWQTYVDDHLMCDIEGHEGHRLTAAAIVGHDGSVWAQSATFPQFKPEEMNGIMTDFNEPGHLAPTGLHLGGTKYMVIQGEAGAVIRGKKGSGGITIKKTGQALVFGIYEEPVTPGQCNMVVERLGDYHLEQGL.

A disulfide bridge connects residues Cys13 and Cys118. Residues 84–100 carry the Involved in PIP2 interaction motif; it reads AVIRGKKGSGGITIKKT. A Phosphothreonine modification is found at Thr114.

It belongs to the profilin family. As to quaternary structure, occurs in many kinds of cells as a complex with monomeric actin in a 1:1 ratio. Phosphorylated by MAP kinases.

Its subcellular location is the cytoplasm. It localises to the cytoskeleton. Its function is as follows. Binds to actin and affects the structure of the cytoskeleton. At high concentrations, profilin prevents the polymerization of actin, whereas it enhances it at low concentrations. This Olea europaea (Common olive) protein is Profilin-3.